We begin with the raw amino-acid sequence, 472 residues long: ATP synthase subunit beta (472 aa).

155–162 is an ATP binding site; the sequence is GGAGVGKT.

This sequence belongs to the ATPase alpha/beta chains family. F-type ATPases have 2 components, CF(1) - the catalytic core - and CF(0) - the membrane proton channel. CF(1) has five subunits: alpha(3), beta(3), gamma(1), delta(1), epsilon(1). CF(0) has three main subunits: a(1), b(2) and c(9-12). The alpha and beta chains form an alternating ring which encloses part of the gamma chain. CF(1) is attached to CF(0) by a central stalk formed by the gamma and epsilon chains, while a peripheral stalk is formed by the delta and b chains.

The protein resides in the cell inner membrane. The enzyme catalyses ATP + H2O + 4 H(+)(in) = ADP + phosphate + 5 H(+)(out). Produces ATP from ADP in the presence of a proton gradient across the membrane. The catalytic sites are hosted primarily by the beta subunits. The polypeptide is ATP synthase subunit beta (Fervidobacterium nodosum (strain ATCC 35602 / DSM 5306 / Rt17-B1)).